The following is a 417-amino-acid chain: S-adenosylmethionine synthase (417 aa).

ATP is bound at residue His16. Asp18 is a Mg(2+) binding site. Glu44 contributes to the K(+) binding site. The L-methionine site is built by Glu57 and Gln100. Positions 100–110 (QSPDIAQGVTS) are flexible loop. ATP-binding positions include 175-177 (DGK), 251-252 (KF), Asp260, 266-267 (RK), Ala283, and Lys287. Asp260 is an L-methionine binding site. Lys291 provides a ligand contact to L-methionine.

The protein belongs to the AdoMet synthase family. In terms of assembly, homotetramer; dimer of dimers. It depends on Mg(2+) as a cofactor. Requires K(+) as cofactor.

The protein localises to the cytoplasm. The catalysed reaction is L-methionine + ATP + H2O = S-adenosyl-L-methionine + phosphate + diphosphate. The protein operates within amino-acid biosynthesis; S-adenosyl-L-methionine biosynthesis; S-adenosyl-L-methionine from L-methionine: step 1/1. In terms of biological role, catalyzes the formation of S-adenosylmethionine (AdoMet) from methionine and ATP. The overall synthetic reaction is composed of two sequential steps, AdoMet formation and the subsequent tripolyphosphate hydrolysis which occurs prior to release of AdoMet from the enzyme. This chain is S-adenosylmethionine synthase, found in Picosynechococcus sp. (strain ATCC 27264 / PCC 7002 / PR-6) (Agmenellum quadruplicatum).